The primary structure comprises 328 residues: dITP/XTP pyrophosphatase (328 aa).

A unknown region spans residues 1 to 129 (MSEKIYEYKD…ATSEQGFGDT (129 aa)). The tract at residues 130–324 (ILIATRNEGK…KLMEVFPAWQ (195 aa)) is NTP pyrophosphatase. 134 to 139 (TRNEGK) is a binding site for substrate. The Proton acceptor role is filled by Asp196. Mg(2+) is bound at residue Asp196. Substrate contacts are provided by residues Ser197, 280-283 (FGYD), Lys303, and 308-309 (HR).

It belongs to the HAM1 NTPase family. Homodimer. Requires Mg(2+) as cofactor.

The enzyme catalyses XTP + H2O = XMP + diphosphate + H(+). It carries out the reaction dITP + H2O = dIMP + diphosphate + H(+). It catalyses the reaction ITP + H2O = IMP + diphosphate + H(+). Pyrophosphatase that catalyzes the hydrolysis of nucleoside triphosphates to their monophosphate derivatives, with a high preference for the non-canonical purine nucleotides XTP (xanthosine triphosphate), dITP (deoxyinosine triphosphate) and ITP. Seems to function as a house-cleaning enzyme that removes non-canonical purine nucleotides from the nucleotide pool, thus preventing their incorporation into DNA/RNA and avoiding chromosomal lesions. The polypeptide is dITP/XTP pyrophosphatase (Streptococcus pyogenes serotype M18 (strain MGAS8232)).